We begin with the raw amino-acid sequence, 273 residues long: MLLFTMGLLLAILQPSTGQFPRVCANTQSLLRKECCPPWEGDGSPCGERSNRGTCQRILLSQAPLGPQFPFSGVDDREDWPSVFYNRTCRCRGNFMGFNCGECKFGFSGQNCTERRLRTRRNIFQLTIREKDKFLAYLNLAKNIPSKDYVIATGTYAQMNNGSNPMFRNINVYDLFVWMHYYASRDTLLGGSNVWRDIDFAHEAPGFLPWHRAFLLLWEREIQKITGDENFTIPYWDWRDAEDCVICTDEYMGGQHPTNPNLLSPASFFSSWQ.

Positions 1–18 (MLLFTMGLLLAILQPSTG) are cleaved as a signal peptide. N-linked (GlcNAc...) asparagine glycans are attached at residues asparagine 86, asparagine 111, and asparagine 161. Positions 180, 202, and 211 each coordinate Cu cation. The N-linked (GlcNAc...) asparagine glycan is linked to asparagine 230.

It belongs to the tyrosinase family. It depends on Cu(2+) as a cofactor.

The protein resides in the melanosome membrane. It localises to the melanosome. The catalysed reaction is 2 L-dopa + O2 = 2 L-dopaquinone + 2 H2O. It catalyses the reaction L-tyrosine + O2 = L-dopaquinone + H2O. This is a copper-containing oxidase that functions in the formation of pigments such as melanins and other polyphenolic compounds. Catalyzes the initial and rate limiting step in the cascade of reactions leading to melanin production from tyrosine. In addition to hydroxylating tyrosine to DOPA (3,4-dihydroxyphenylalanine), also catalyzes the oxidation of DOPA to DOPA-quinone, and possibly the oxidation of DHI (5,6-dihydroxyindole) to indole-5,6 quinone. The chain is Tyrosinase (TYR) from Coturnix japonica (Japanese quail).